Here is an 837-residue protein sequence, read N- to C-terminus: WW domain-containing protein tag-325 (837 aa).

Polar residues predominate over residues 1-11 (MTTAVQPSDTT). The disordered stretch occupies residues 1–66 (MTTAVQPSDT…SNGQNYADDP (66 aa)). The span at 33 to 43 (SESAESSSSSS) shows a compositional bias: low complexity. The segment covering 44-61 (QTNVSAANTLPRESNGQN) has biased composition (polar residues). A WW domain is found at 96 to 129 (RDLLNGWFEYETDVGRTFFFNKETGKSQWIPPRF). The segment covering 150-161 (TCSFQGSSTSSS) has biased composition (low complexity). Disordered stretches follow at residues 150 to 181 (TCSFQGSSTSSSEEQKENKMRESLADDDRKSQ), 194 to 257 (DDVD…STAS), 338 to 403 (TTSS…EPAE), 548 to 574 (MRRRDDPMSQSAIETVSTSVSTDEPRP), and 778 to 800 (KNKKAGKKAKPSKKEETQATPVQ). Residues 162 to 181 (EEQKENKMRESLADDDRKSQ) are compositionally biased toward basic and acidic residues. The span at 247–257 (PTSSRKASTAS) shows a compositional bias: polar residues. The span at 371 to 403 (RCEERRGSGDGREPVRTIRCGDLERSENDEPAE) shows a compositional bias: basic and acidic residues. One can recognise a PH domain in the interval 386–505 (RTIRCGDLER…WYKSLEEVVA (120 aa)). A compositionally biased stretch (polar residues) spans 556–569 (SQSAIETVSTSVST). The Rho-GAP domain occupies 610–827 (STLSAICQHE…YLLESANKFD (218 aa)). Positions 778–788 (KNKKAGKKAKP) are enriched in basic residues.

This Caenorhabditis elegans protein is WW domain-containing protein tag-325 (tag-325).